Reading from the N-terminus, the 1794-residue chain is Non-reducing polyketide synthase nscA (1794 aa).

The segment at 19 to 256 is N-terminal acylcarrier protein transacylase domain (SAT); sequence DLKDLFRRLH…PLPVYDGLCH (238 aa). One can recognise a Ketosynthase family 3 (KS3) domain in the interval 389-822; sequence ASKLAIVGMA…GGNTTVLLED (434 aa). The tract at residues 427-448 is disordered; the sequence is PDRFDLNTHYDPTGKTENATQT. The span at 428–440 shows a compositional bias: basic and acidic residues; it reads DRFDLNTHYDPTG. Active-site for beta-ketoacyl synthase activity residues include Cys-562, His-697, and His-740. The tract at residues 928 to 1249 is malonyl-CoA:ACP transacylase (MAT) domain; the sequence is FTGQGAYYSG…LVTLHLAGLT (322 aa). Residues 1314–1633 are product template (PT) domain; it reads TSLVHQITAE…RLLMDRFFSP (320 aa). An N-terminal hotdog fold region spans residues 1318-1454; the sequence is HQITAETVEA…GVVRFEDPAA (137 aa). One can recognise a PKS/mFAS DH domain in the interval 1318 to 1628; it reads HQITAETVEA…FRRVPRLLMD (311 aa). Residue His-1350 is the Proton acceptor; for dehydratase activity of the active site. Residues 1482–1628 form a C-terminal hotdog fold region; the sequence is ASKLSKPLAY…FRRVPRLLMD (147 aa). Residue Asp-1539 is the Proton donor; for dehydratase activity of the active site. Disordered stretches follow at residues 1637 to 1665 and 1682 to 1718; these read SHAEKQLQETAPSATSVKKSTPPAAEAPA and ASKSEVSTPPLTPPSQQESPGESAVITPATSDRGDPV. Polar residues-rich tracts occupy residues 1644–1655 and 1685–1701; these read QETAPSATSVKK and SEVSTPPLTPPSQQESP. Residues 1717–1794 form the Carrier domain; sequence PVDAGVVGQC…EMTAWLEEYC (78 aa). Ser-1754 is subject to O-(pantetheine 4'-phosphoryl)serine.

The cofactor is pantetheine 4'-phosphate.

It functions in the pathway secondary metabolite biosynthesis. In terms of biological role, non-reducing polyketide synthase; part of the gene cluster that mediates the biosynthesis of neosartoricin, a prenylated anthracenone that exhibits T-cell antiproliferative activity, suggestive of a physiological role as an immunosuppressive agent. The non-reducing polyketide synthase nscA probably synthesizes and cyclizes the decaketide backbone. The hydrolase nscB then mediates the product release through hydrolysis followed by spontaneous decarboxylation. The prenyltransferase nscD catalyzes the addition of the dimethylallyl group to the aromatic C5. The FAD-dependent monooxygenase nscC is then responsible for the stereospecific hydroxylation at C2. There is no gene encoding O-acetyltransferase in the nsc gene cluster; thus, the last step of 2-O-acetylation leading to neosartoricin may be catalyzed by an unidentified O-acetyltransferase. This Neosartorya fischeri (strain ATCC 1020 / DSM 3700 / CBS 544.65 / FGSC A1164 / JCM 1740 / NRRL 181 / WB 181) (Aspergillus fischerianus) protein is Non-reducing polyketide synthase nscA.